The sequence spans 421 residues: Heterogeneous nuclear ribonucleoprotein 27C (421 aa).

2 consecutive RRM domains span residues glycine 7–glutamine 88 and tyrosine 96–proline 173. Disordered stretches follow at residues alanine 171–tyrosine 191 and glycine 240–aspartate 373. Serine 177 carries the phosphoserine modification. Residues glycine 240–tyrosine 250 are compositionally biased toward polar residues. A compositionally biased stretch (pro residues) spans proline 264–glutamine 273. The segment covering serine 275–glutamine 284 has biased composition (polar residues). Over residues asparagine 293–glycine 302 the composition is skewed to low complexity. Serine 366, serine 368, and serine 370 each carry phosphoserine. Tyrosine 372 is modified (phosphotyrosine). A Phosphoserine modification is found at serine 379. Positions glutamate 392 to valine 421 are disordered. Over residues glycine 406–valine 421 the composition is skewed to polar residues.

In terms of assembly, interacts with sqd; the interaction is RNA-dependent and may be specific for sqd isoform A/sqdA. Interacts with otu; the interaction is RNA-independent.

It is found in the nucleus. The protein localises to the cytoplasm. In terms of biological role, this protein is a component of ribonucleosomes. Could be needed to organize a concentration gradient of a dorsalizing morphogen (Dm) originating in the germinal vesicle. Interacts with grk mRNA (via 3' UTR) and involved in its localization to the dorsal anterior region of the oocyte during dorsal-ventral axis determination; may function as a ribonuclear protein complex together with sqd and otu. Required for polytene chromosome dispersal in nurse cells during oogenesis. May be involved in the regulation of splicing. In Drosophila melanogaster (Fruit fly), this protein is Heterogeneous nuclear ribonucleoprotein 27C.